A 159-amino-acid chain; its full sequence is Transmembrane protein 92 (159 aa).

The N-terminal stretch at 1–26 is a signal peptide; the sequence is MSQAWVPGLAPTLLFSLLAGPQKIAA. At 27-57 the chain is on the extracellular side; sequence KCGLILACPKGFKCCGDSCCQENELFPGPVR. A helical membrane pass occupies residues 58 to 78; it reads IFVIIFLVILSVFCICGLAKC. Residues 79 to 159 are Cytoplasmic-facing; that stretch reads FCRNCREPEP…DQRGIDNPAF (81 aa). The disordered stretch occupies residues 122–159; that stretch reads EVILKPSLGPTPTEPPPPYSFRPEEYTGDQRGIDNPAF.

The protein localises to the membrane. This Homo sapiens (Human) protein is Transmembrane protein 92 (TMEM92).